We begin with the raw amino-acid sequence, 259 residues long: Adenosylcobinamide-GDP ribazoletransferase (259 aa).

A run of 5 helical transmembrane segments spans residues 43-63 (LAGA…LGLG), 64-84 (ASSM…TGAL), 116-136 (FGVL…ASLV), 141-161 (PINV…LMVW), and 185-205 (TLYT…APVT).

The protein belongs to the CobS family. Mg(2+) serves as cofactor.

The protein resides in the cell inner membrane. It carries out the reaction alpha-ribazole + adenosylcob(III)inamide-GDP = adenosylcob(III)alamin + GMP + H(+). It catalyses the reaction alpha-ribazole 5'-phosphate + adenosylcob(III)inamide-GDP = adenosylcob(III)alamin 5'-phosphate + GMP + H(+). It functions in the pathway cofactor biosynthesis; adenosylcobalamin biosynthesis; adenosylcobalamin from cob(II)yrinate a,c-diamide: step 7/7. In terms of biological role, joins adenosylcobinamide-GDP and alpha-ribazole to generate adenosylcobalamin (Ado-cobalamin). Also synthesizes adenosylcobalamin 5'-phosphate from adenosylcobinamide-GDP and alpha-ribazole 5'-phosphate. The sequence is that of Adenosylcobinamide-GDP ribazoletransferase from Allorhizobium ampelinum (strain ATCC BAA-846 / DSM 112012 / S4) (Agrobacterium vitis (strain S4)).